Here is a 446-residue protein sequence, read N- to C-terminus: Phosphoglucosamine mutase (446 aa).

Serine 101 serves as the catalytic Phosphoserine intermediate. The Mg(2+) site is built by serine 101, aspartate 240, aspartate 242, and aspartate 244. Serine 101 bears the Phosphoserine mark.

The protein belongs to the phosphohexose mutase family. Mg(2+) serves as cofactor. In terms of processing, activated by phosphorylation.

The enzyme catalyses alpha-D-glucosamine 1-phosphate = D-glucosamine 6-phosphate. Catalyzes the conversion of glucosamine-6-phosphate to glucosamine-1-phosphate. The protein is Phosphoglucosamine mutase of Pseudomonas putida (strain ATCC 700007 / DSM 6899 / JCM 31910 / BCRC 17059 / LMG 24140 / F1).